A 53-amino-acid polypeptide reads, in one-letter code: Large ribosomal subunit protein bL33 (53 aa).

Belongs to the bacterial ribosomal protein bL33 family.

This chain is Large ribosomal subunit protein bL33, found in Ureaplasma parvum serovar 3 (strain ATCC 27815 / 27 / NCTC 11736).